The chain runs to 794 residues: DNA mismatch repair protein pms1 (794 aa).

2 disordered regions span residues 351–384 (SQIP…SFSY) and 409–442 (GASL…TASS). Residues 352 to 371 (QIPDSSGDSTDQELPQSIPA) are compositionally biased toward polar residues. Basic and acidic residues predominate over residues 419–429 (LPERLQKDSMR). Polar residues predominate over residues 430 to 442 (RSSPLNEKVTASS).

It belongs to the DNA mismatch repair MutL/HexB family.

Functionally, this protein is involved in the repair of mismatches in DNA. This chain is DNA mismatch repair protein pms1 (pms1), found in Schizosaccharomyces pombe (strain 972 / ATCC 24843) (Fission yeast).